Consider the following 285-residue polypeptide: SLAM family member 8 (285 aa).

An N-terminal signal peptide occupies residues Met1–Gly22. Topologically, residues Ala23–Asp233 are extracellular. N-linked (GlcNAc...) asparagine glycosylation occurs at Asn85. Residues Pro128–Thr215 enclose the Ig-like C2-type domain. Cys152 and Cys201 form a disulfide bridge. A helical transmembrane segment spans residues Val234–Trp254. At His255–Pro285 the chain is on the cytoplasmic side. The disordered stretch occupies residues Lys262–Pro285.

As to expression, expressed in lymph node, spleen, thymus and bone marrow.

It is found in the membrane. Functionally, may play a role in B-lineage commitment and/or modulation of signaling through the B-cell receptor. The polypeptide is SLAM family member 8 (SLAMF8) (Homo sapiens (Human)).